The primary structure comprises 266 residues: MISRITNKLQALKEYDEKALITYVTAGDPDLETTFDLVLAMEKAGADIIELGIPYSDPLADGPVIQRASQRALNAGANMEAIFELVIKLREKTQIPLVFLVYYNCVFKYGLETFLNRCQEIGIDGLIIPDLPLEERRELQVMMQQYPMDLIPLVAPTSEDRMKEIVQDAEGFIYCVSSTGVTGKRNSLAGNLEGFMQQLRTYTEIPLVIGFGISNSEMMDKLKNICDGFIIGSAVIEKIEAGLEDRSSVERVSKFIEKLYEFKNLG.

Active-site proton acceptor residues include E50 and D61.

The protein belongs to the TrpA family. In terms of assembly, tetramer of two alpha and two beta chains.

The catalysed reaction is (1S,2R)-1-C-(indol-3-yl)glycerol 3-phosphate + L-serine = D-glyceraldehyde 3-phosphate + L-tryptophan + H2O. The protein operates within amino-acid biosynthesis; L-tryptophan biosynthesis; L-tryptophan from chorismate: step 5/5. In terms of biological role, the alpha subunit is responsible for the aldol cleavage of indoleglycerol phosphate to indole and glyceraldehyde 3-phosphate. The sequence is that of Tryptophan synthase alpha chain from Alkaliphilus metalliredigens (strain QYMF).